A 195-amino-acid polypeptide reads, in one-letter code: Thymidylate kinase (195 aa).

Residue 7–14 participates in ATP binding; that stretch reads GIDGSGKT.

Belongs to the thymidylate kinase family.

The catalysed reaction is dTMP + ATP = dTDP + ADP. Its function is as follows. Phosphorylation of dTMP to form dTDP in both de novo and salvage pathways of dTTP synthesis. The polypeptide is Thymidylate kinase (tmk) (Aquifex aeolicus (strain VF5)).